Consider the following 404-residue polypeptide: Argininosuccinate synthase (404 aa).

An ATP-binding site is contributed by A9–S17. Residue Y86 coordinates L-citrulline. G116 provides a ligand contact to ATP. Positions 118, 122, and 123 each coordinate L-aspartate. N122 serves as a coordination point for L-citrulline. L-citrulline-binding residues include R126, S174, S183, E259, and Y271.

Belongs to the argininosuccinate synthase family. Type 1 subfamily. In terms of assembly, homotetramer.

It is found in the cytoplasm. It carries out the reaction L-citrulline + L-aspartate + ATP = 2-(N(omega)-L-arginino)succinate + AMP + diphosphate + H(+). It participates in amino-acid biosynthesis; L-arginine biosynthesis; L-arginine from L-ornithine and carbamoyl phosphate: step 2/3. This is Argininosuccinate synthase from Listeria monocytogenes serovar 1/2a (strain ATCC BAA-679 / EGD-e).